The sequence spans 275 residues: Lectin (275 aa).

Residues 1 to 30 form the signal peptide; the sequence is MASLQTQMISFYLIFLSILLTTIFFFKVNS. Positions 111 and 129 each coordinate D-glucose. The Mn(2+) site is built by glutamate 149 and aspartate 151. Residues aspartate 151, phenylalanine 153, asparagine 155, and aspartate 159 each coordinate Ca(2+). Mn(2+)-binding residues include aspartate 159 and histidine 166. Residues 211 to 217 constitute a propeptide that is removed on maturation; sequence NSLEEEN. D-glucose-binding residues include glycine 246 and alanine 247. The propeptide occupies 270-275; sequence KQAADA.

It belongs to the leguminous lectin family. In terms of assembly, heterotetramer of two alpha and two beta chains. Post-translationally, the mature form consists of two chains, alpha and beta, produced by cleavage of the immature protein. These remain cleaved, yet fold together to form one subunit.

In terms of biological role, D-mannose specific lectin. In Lens culinaris subsp. culinaris (Cultivated lentil), this protein is Lectin.